The chain runs to 192 residues: Cell division protein SepF (192 aa).

Residues 15–70 (GDPLEYEEDGEEYEQVYREENKREEARRATAGTAAAATPTAAAQASDAAPMGSGPA) form a disordered region. The span at 18–28 (LEYEEDGEEYE) shows a compositional bias: acidic residues. A compositionally biased stretch (basic and acidic residues) spans 29-42 (QVYREENKREEARR). Positions 43–63 (ATAGTAAAATPTAAAQASDAA) are enriched in low complexity.

This sequence belongs to the SepF family. As to quaternary structure, homodimer. Interacts with FtsZ.

Its subcellular location is the cytoplasm. Functionally, cell division protein that is part of the divisome complex and is recruited early to the Z-ring. Probably stimulates Z-ring formation, perhaps through the cross-linking of FtsZ protofilaments. Its function overlaps with FtsA. The sequence is that of Cell division protein SepF from Gloeobacter violaceus (strain ATCC 29082 / PCC 7421).